Here is a 205-residue protein sequence, read N- to C-terminus: Transcriptional regulator GfcR (205 aa).

It belongs to the purine/pyrimidine phosphoribosyltransferase family. GfcR subfamily.

The sequence is that of Transcriptional regulator GfcR from Methanococcus maripaludis (strain DSM 14266 / JCM 13030 / NBRC 101832 / S2 / LL).